Consider the following 172-residue polypeptide: Large ribosomal subunit protein uL10 (172 aa).

The protein belongs to the universal ribosomal protein uL10 family. As to quaternary structure, part of the ribosomal stalk of the 50S ribosomal subunit. The N-terminus interacts with L11 and the large rRNA to form the base of the stalk. The C-terminus forms an elongated spine to which L12 dimers bind in a sequential fashion forming a multimeric L10(L12)X complex.

In terms of biological role, forms part of the ribosomal stalk, playing a central role in the interaction of the ribosome with GTP-bound translation factors. In Syntrophotalea carbinolica (strain DSM 2380 / NBRC 103641 / GraBd1) (Pelobacter carbinolicus), this protein is Large ribosomal subunit protein uL10.